Here is a 181-residue protein sequence, read N- to C-terminus: Transcriptional repressor NrdR (181 aa).

Residues Cys3–Cys34 fold into a zinc finger. The ATP-cone domain occupies Leu46–Asp136. A disordered region spans residues Ala148–Arg181.

It belongs to the NrdR family. Requires Zn(2+) as cofactor.

Functionally, negatively regulates transcription of bacterial ribonucleotide reductase nrd genes and operons by binding to NrdR-boxes. This chain is Transcriptional repressor NrdR, found in Frankia casuarinae (strain DSM 45818 / CECT 9043 / HFP020203 / CcI3).